Consider the following 234-residue polypeptide: Phosphoribosylaminoimidazole-succinocarboxamide synthase (234 aa).

It belongs to the SAICAR synthetase family.

It catalyses the reaction 5-amino-1-(5-phospho-D-ribosyl)imidazole-4-carboxylate + L-aspartate + ATP = (2S)-2-[5-amino-1-(5-phospho-beta-D-ribosyl)imidazole-4-carboxamido]succinate + ADP + phosphate + 2 H(+). Its pathway is purine metabolism; IMP biosynthesis via de novo pathway; 5-amino-1-(5-phospho-D-ribosyl)imidazole-4-carboxamide from 5-amino-1-(5-phospho-D-ribosyl)imidazole-4-carboxylate: step 1/2. This Streptococcus agalactiae serotype III (strain NEM316) protein is Phosphoribosylaminoimidazole-succinocarboxamide synthase.